The primary structure comprises 136 residues: Nucleoside diphosphate kinase (136 aa).

ATP contacts are provided by K10, F58, R86, T92, R104, and N114. H117 serves as the catalytic Pros-phosphohistidine intermediate.

Belongs to the NDK family. As to quaternary structure, homotetramer. Mg(2+) serves as cofactor.

It is found in the cytoplasm. The catalysed reaction is a 2'-deoxyribonucleoside 5'-diphosphate + ATP = a 2'-deoxyribonucleoside 5'-triphosphate + ADP. It carries out the reaction a ribonucleoside 5'-diphosphate + ATP = a ribonucleoside 5'-triphosphate + ADP. In terms of biological role, major role in the synthesis of nucleoside triphosphates other than ATP. The ATP gamma phosphate is transferred to the NDP beta phosphate via a ping-pong mechanism, using a phosphorylated active-site intermediate. The chain is Nucleoside diphosphate kinase from Mycobacteroides abscessus (strain ATCC 19977 / DSM 44196 / CCUG 20993 / CIP 104536 / JCM 13569 / NCTC 13031 / TMC 1543 / L948) (Mycobacterium abscessus).